Consider the following 166-residue polypeptide: MAKVETKNEGLVEKLVAVDRVAKVVKGGRIFSFTALTVVGDGNGRVGFGRGKAREVPAAISKALEAARRNMITVDLAGTTLQHPVNARHGASRVYMQPASEGTGVIAGGAMRAVLEAAGVHNVLAKCYGSTNAANVVNATFKGLRDMTSPEKVAAKRGKSVEEIQG.

The S5 DRBM domain occupies 11–74 (LVEKLVAVDR…EAARRNMITV (64 aa)).

The protein belongs to the universal ribosomal protein uS5 family. As to quaternary structure, part of the 30S ribosomal subunit. Contacts proteins S4 and S8.

In terms of biological role, with S4 and S12 plays an important role in translational accuracy. Located at the back of the 30S subunit body where it stabilizes the conformation of the head with respect to the body. The chain is Small ribosomal subunit protein uS5 from Acinetobacter baumannii (strain ATCC 17978 / DSM 105126 / CIP 53.77 / LMG 1025 / NCDC KC755 / 5377).